A 228-amino-acid polypeptide reads, in one-letter code: Sec-independent protein translocase protein TatB (228 aa).

A helical transmembrane segment spans residues 1–21; it reads MFDFGLGELVFVGIIALIVLG. 2 disordered regions span residues 138–162 and 195–228; these read RSYA…AETD and PVPH…VRKS. The segment covering 206 to 228 has biased composition (basic residues); sequence AISRKRDLRPKSRAKPKLRVRKS.

The protein belongs to the TatB family. As to quaternary structure, the Tat system comprises two distinct complexes: a TatABC complex, containing multiple copies of TatA, TatB and TatC subunits, and a separate TatA complex, containing only TatA subunits. Substrates initially bind to the TatABC complex, which probably triggers association of the separate TatA complex to form the active translocon.

Its subcellular location is the cell inner membrane. Part of the twin-arginine translocation (Tat) system that transports large folded proteins containing a characteristic twin-arginine motif in their signal peptide across membranes. Together with TatC, TatB is part of a receptor directly interacting with Tat signal peptides. TatB may form an oligomeric binding site that transiently accommodates folded Tat precursor proteins before their translocation. The chain is Sec-independent protein translocase protein TatB from Neisseria meningitidis serogroup A / serotype 4A (strain DSM 15465 / Z2491).